A 215-amino-acid chain; its full sequence is Protein-L-isoaspartate O-methyltransferase 1 (215 aa).

Ser-61 is a catalytic residue.

This sequence belongs to the methyltransferase superfamily. L-isoaspartyl/D-aspartyl protein methyltransferase family.

It localises to the cytoplasm. The enzyme catalyses [protein]-L-isoaspartate + S-adenosyl-L-methionine = [protein]-L-isoaspartate alpha-methyl ester + S-adenosyl-L-homocysteine. In terms of biological role, catalyzes the methyl esterification of L-isoaspartyl residues in peptides and proteins that result from spontaneous decomposition of normal L-aspartyl and L-asparaginyl residues. It plays a role in the repair and/or degradation of damaged proteins. The protein is Protein-L-isoaspartate O-methyltransferase 1 of Pelobacter propionicus (strain DSM 2379 / NBRC 103807 / OttBd1).